A 495-amino-acid polypeptide reads, in one-letter code: Putative aldehyde dehydrogenase AldA (495 aa).

212–218 is a binding site for NAD(+); sequence GKGSESG. Active-site residues include Glu256 and Cys290.

Belongs to the aldehyde dehydrogenase family.

The catalysed reaction is an aldehyde + NAD(+) + H2O = a carboxylate + NADH + 2 H(+). In Staphylococcus aureus (strain Mu50 / ATCC 700699), this protein is Putative aldehyde dehydrogenase AldA (aldA).